The sequence spans 244 residues: Probable histone-lysine N-methyltransferase set-23 (244 aa).

The Pre-SET domain occupies 25–86 (EGCNCEAECS…SCRNRVVQCG (62 aa)). Zn(2+) contacts are provided by Cys27, Cys29, Cys33, Cys39, Cys41, Cys65, Cys69, Cys71, and Cys78. The SET domain maps to 89–213 (KKLEIFSTCE…RGEELCYDYG (125 aa)). Residues 101 to 103 (KGF), Asp141, Tyr143, Arg170, and 173 to 174 (NH) each bind S-adenosyl-L-methionine. Zn(2+) contacts are provided by Cys176, Cys225, Cys227, and Cys232. One can recognise a Post-SET domain in the interval 221–237 (NRKLCLCKSEKCRKYLP).

This sequence belongs to the class V-like SAM-binding methyltransferase superfamily. Histone-lysine methyltransferase family. Suvar3-9 subfamily.

Its subcellular location is the nucleus. It localises to the chromosome. The enzyme catalyses L-lysyl-[histone] + S-adenosyl-L-methionine = N(6)-methyl-L-lysyl-[histone] + S-adenosyl-L-homocysteine + H(+). Functionally, probable histone methyltransferase. Required for embryonic development. This chain is Probable histone-lysine N-methyltransferase set-23 (set-23), found in Caenorhabditis elegans.